Reading from the N-terminus, the 238-residue chain is Zinc finger protein ZAT6 (238 aa).

The span at 1–15 (MALETLTSPRLSSPM) shows a compositional bias: polar residues. The tract at residues 1 to 42 (MALETLTSPRLSSPMPTLFQDSALGFHGSKGKRSKRSRSEFD) is disordered. The short motif at 30–38 (KGKRSKRSR) is the Nuclear localization signal element. 2 C2H2-type zinc fingers span residues 89-111 (YKCS…KASH) and 148-170 (HVCS…KRCH). A disordered region spans residues 175–202 (NGGGVSSSVSNSEDVGSTSHVSSGHRGF). A compositionally biased stretch (low complexity) spans 180–193 (SSSVSNSEDVGSTS).

It localises to the nucleus. In terms of biological role, probable transcription factor that regulates root development and phosphate (Pi) acquisition and homeostasis. Probably acts as a repressor of primary root growth and regulates Pi homeostasis through the control of root architecture. This is Zinc finger protein ZAT6 (ZAT6) from Arabidopsis thaliana (Mouse-ear cress).